We begin with the raw amino-acid sequence, 157 residues long: Phosphopantetheine adenylyltransferase (157 aa).

Position 8 (threonine 8) interacts with substrate. Residues 8 to 9 (TF) and histidine 16 contribute to the ATP site. Residues lysine 40, threonine 72, and arginine 86 each coordinate substrate. ATP contacts are provided by residues 87–89 (GLR), glutamate 97, and 122–128 (YSFLSSS).

This sequence belongs to the bacterial CoaD family. As to quaternary structure, homohexamer. Mg(2+) serves as cofactor.

The protein resides in the cytoplasm. The enzyme catalyses (R)-4'-phosphopantetheine + ATP + H(+) = 3'-dephospho-CoA + diphosphate. It functions in the pathway cofactor biosynthesis; coenzyme A biosynthesis; CoA from (R)-pantothenate: step 4/5. In terms of biological role, reversibly transfers an adenylyl group from ATP to 4'-phosphopantetheine, yielding dephospho-CoA (dPCoA) and pyrophosphate. This Prochlorococcus marinus (strain MIT 9215) protein is Phosphopantetheine adenylyltransferase.